The chain runs to 468 residues: Glutamine synthetase (468 aa).

The 85-residue stretch at 14 to 98 (HDVKYVDLRF…ILCDVYEPST (85 aa)) folds into the GS beta-grasp domain. Residues 106–468 (PRGIAKAAEK…PIEYKMYYSV (363 aa)) form the GS catalytic domain. Mg(2+) contacts are provided by E131 and E133. E209 serves as a coordination point for ATP. 2 residues coordinate Mg(2+): E214 and E221. L-glutamate is bound by residues 265–266 (NG) and G266. H270 provides a ligand contact to Mg(2+). ATP is bound by residues 272 to 274 (HQS) and S274. L-glutamate-binding residues include R322, E328, and R340. ATP-binding residues include R340, R345, and K353. E358 lines the Mg(2+) pocket. R360 provides a ligand contact to L-glutamate. Residue Y398 is modified to O-AMP-tyrosine.

It belongs to the glutamine synthetase family. In terms of assembly, oligomer of 12 subunits arranged in the form of two hexameric ring. Mg(2+) is required as a cofactor.

The protein localises to the cytoplasm. The enzyme catalyses L-glutamate + NH4(+) + ATP = L-glutamine + ADP + phosphate + H(+). Its activity is regulated as follows. The activity of this enzyme could be controlled by adenylation under conditions of abundant glutamine. Catalyzes the ATP-dependent biosynthesis of glutamine from glutamate and ammonia. This is Glutamine synthetase from Azospirillum brasilense.